We begin with the raw amino-acid sequence, 438 residues long: UDP-N-acetylglucosamine 1-carboxyvinyltransferase (438 aa).

35–36 (KN) serves as a coordination point for phosphoenolpyruvate. Position 105 (arginine 105) interacts with UDP-N-acetyl-alpha-D-glucosamine. Catalysis depends on cysteine 129, which acts as the Proton donor. Cysteine 129 is subject to 2-(S-cysteinyl)pyruvic acid O-phosphothioketal. UDP-N-acetyl-alpha-D-glucosamine contacts are provided by residues 134–138 (RPVDL), aspartate 321, and valine 343.

It belongs to the EPSP synthase family. MurA subfamily.

The protein localises to the cytoplasm. It carries out the reaction phosphoenolpyruvate + UDP-N-acetyl-alpha-D-glucosamine = UDP-N-acetyl-3-O-(1-carboxyvinyl)-alpha-D-glucosamine + phosphate. It functions in the pathway cell wall biogenesis; peptidoglycan biosynthesis. In terms of biological role, cell wall formation. Adds enolpyruvyl to UDP-N-acetylglucosamine. The chain is UDP-N-acetylglucosamine 1-carboxyvinyltransferase from Synechocystis sp. (strain ATCC 27184 / PCC 6803 / Kazusa).